The following is a 668-amino-acid chain: Pentatricopeptide repeat-containing protein CRP1, chloroplastic (668 aa).

The transit peptide at 1–64 directs the protein to the chloroplast; it reads MPASLLPPTF…SASLTSPSPP (64 aa). PPR repeat units lie at residues 154–188, 189–226, 227–261, 262–297, 298–332, 333–367, 368–402, 403–437, 438–472, 473–507, 508–542, 543–577, 578–612, and 613–647; these read SPLLLNSLLAASAAASRPAVALRLLSLLREHDFLP, DLASYSHLLASLLNTRDPPDAALLERLLGDLRESRLEP, DAPLFSDLISAFARAALPDAALELLASAQAIGLTP, RSNAVTALISALGTAGRVAEAEALFLEFFLAGEIKP, RTRAYNALLKGYVRIASLKNAEQVLDEMSQCGVAP, DEATYSLLVDAYTRAGRWESARILLKEMEADGVKP, SSYVFSRILAGFRDRGDWQKAFAVLREMQASGVRP, DRHFYNVMIDTFGKYNCLGHAMDAFNKMREEGIEP, DVVTWNTLIDAHCKGGRHDRAAELFEEMRESNCPP, GTTTYNIMINLLGEQEHWEGVEAMLSEMKEQGLVP, NIITYTTLVDVYGRSGRYKEAIDCIEAMKADGLKP, SPTMYHALVNAYAQRGLADHALNVVKAMKADGLEV, SILVLNSLINAFGEDRRVVEAFSVLQFMRENGLRP, and DVITYTTLMKALIRVEQFDKVPVIYEEMITSGCAP.

It belongs to the PPR family. P subfamily. Component of a multisubunit complex.

The protein localises to the plastid. It localises to the chloroplast stroma. Required for the translation of the chloroplast petA and petD mRNAs. Required for the processing of the petD mRNA from a polycistronic precursor. Binds with high affinity to the 5'-UTR of the chloroplastic petA transcript. Activates psaC and petA translation by binding their 5'-UTRs. In Zea mays (Maize), this protein is Pentatricopeptide repeat-containing protein CRP1, chloroplastic.